Reading from the N-terminus, the 412-residue chain is Probable serine/threonine-protein kinase PBL4 (412 aa).

G2 carries the N-myristoyl glycine lipid modification. The S-palmitoyl cysteine moiety is linked to residue C4. The interval 14–40 (RESPYRGSSRISAKRSQSSRLSSLTIQ) is disordered. Low complexity predominate over residues 21 to 40 (SSRISAKRSQSSRLSSLTIQ). Residue T72 is modified to Phosphothreonine. The Protein kinase domain maps to 83-369 (FRPDSVIGEG…STLEELEMTL (287 aa)). Residues 89–97 (IGEGGFGYV) and K121 contribute to the ATP site. Y167 bears the Phosphotyrosine mark. D215 functions as the Proton acceptor in the catalytic mechanism. S219 and S249 each carry phosphoserine. A phosphothreonine mark is found at T250 and T255. A Phosphotyrosine modification is found at Y263.

This sequence belongs to the protein kinase superfamily. Ser/Thr protein kinase family.

The protein localises to the cell membrane. It carries out the reaction L-seryl-[protein] + ATP = O-phospho-L-seryl-[protein] + ADP + H(+). The catalysed reaction is L-threonyl-[protein] + ATP = O-phospho-L-threonyl-[protein] + ADP + H(+). In terms of biological role, may be involved in plant defense signaling. The chain is Probable serine/threonine-protein kinase PBL4 from Arabidopsis thaliana (Mouse-ear cress).